Here is a 336-residue protein sequence, read N- to C-terminus: Dihydroorotate dehydrogenase (quinone) (336 aa).

Residues 62–66 (AGLDK) and T86 each bind FMN. K66 is a binding site for substrate. 111–115 (NRMGF) is a binding site for substrate. The FMN site is built by N139 and N172. N172 contacts substrate. Residue S175 is the Nucleophile of the active site. N177 serves as a coordination point for substrate. FMN contacts are provided by K217 and T245. 246–247 (NT) lines the substrate pocket. FMN-binding positions include G268, G297, and 318–319 (YT).

This sequence belongs to the dihydroorotate dehydrogenase family. Type 2 subfamily. Monomer. The cofactor is FMN.

Its subcellular location is the cell membrane. It carries out the reaction (S)-dihydroorotate + a quinone = orotate + a quinol. It functions in the pathway pyrimidine metabolism; UMP biosynthesis via de novo pathway; orotate from (S)-dihydroorotate (quinone route): step 1/1. In terms of biological role, catalyzes the conversion of dihydroorotate to orotate with quinone as electron acceptor. The polypeptide is Dihydroorotate dehydrogenase (quinone) (Vibrio parahaemolyticus serotype O3:K6 (strain RIMD 2210633)).